The chain runs to 58 residues: Small ribosomal subunit protein bS21 (58 aa).

Positions 30–58 (SEVRKREHYEKPSVKRKKKSEAARKRKFK) are disordered. Positions 31-42 (EVRKREHYEKPS) are enriched in basic and acidic residues. Basic residues predominate over residues 43–58 (VKRKKKSEAARKRKFK).

Belongs to the bacterial ribosomal protein bS21 family.

This chain is Small ribosomal subunit protein bS21, found in Clostridium perfringens (strain ATCC 13124 / DSM 756 / JCM 1290 / NCIMB 6125 / NCTC 8237 / Type A).